A 145-amino-acid chain; its full sequence is Basic phospholipase A2 PC14 (145 aa).

A signal peptide spans 1–21 (MYPAHLLLLLAVCVSLLGASA). Positions 22–27 (IPPLPL) are excised as a propeptide. 7 cysteine pairs are disulfide-bonded: cysteine 38/cysteine 98, cysteine 54/cysteine 144, cysteine 56/cysteine 72, cysteine 71/cysteine 125, cysteine 78/cysteine 118, cysteine 87/cysteine 111, and cysteine 105/cysteine 116. Residues tyrosine 55, glycine 57, and glycine 59 each contribute to the Ca(2+) site. The active site involves histidine 75. Aspartate 76 contacts Ca(2+). The active site involves aspartate 119.

It belongs to the phospholipase A2 family. Group I subfamily. D49 sub-subfamily. The cofactor is Ca(2+).

It localises to the secreted. The catalysed reaction is a 1,2-diacyl-sn-glycero-3-phosphocholine + H2O = a 1-acyl-sn-glycero-3-phosphocholine + a fatty acid + H(+). In terms of biological role, PLA2 catalyzes the calcium-dependent hydrolysis of the 2-acyl groups in 3-sn-phosphoglycerides. The protein is Basic phospholipase A2 PC14 of Laticauda laticaudata (Blue-ringed sea krait).